The chain runs to 1085 residues: Aminopeptidase N (1085 aa).

Positions 1-30 form a signal peptide, required for ER targeting and membrane association; not cleaved; the sequence is MKLTKGCAYKYIIFTVLILANILYDNKKRC. The segment at 1–200 is sufficient for targeting to the food vacuole; that stretch reads MKLTKGCAYK…VKKNEPKIHY (200 aa). A disordered region spans residues 108-130; that stretch reads EKGDNNNNNHQNNNGNDNKKRLG. Positions 112–123 are enriched in low complexity; sequence NNNNNHQNNNGN. 4 residues coordinate a peptide: glutamate 319, glycine 460, alanine 461, and glutamate 463. Histidine 496 provides a ligand contact to Zn(2+). The Proton acceptor role is filled by glutamate 497. Zn(2+)-binding residues include histidine 500 and glutamate 519.

This sequence belongs to the peptidase M1 family. As to quaternary structure, heterodimer of the p68 form and the p35 form which are derived from the p120 precursor. Zn(2+) serves as cofactor. Post-translationally, the full length protein appears to be cleaved into a 120 kDa precursor. This precursor is then proteolytically cleaved at the N-terminus generating a 96 kDa form which is further processed at the C-terminus into 68 kDa and 35 kDa forms that remain associated.

The protein localises to the parasitophorous vacuole membrane. It is found in the nucleus. Its subcellular location is the cytoplasm. It localises to the vacuole lumen. With respect to regulation, inhibited by 1,10-phenanthroline, EDTA and bestatin. Inhibited by (Benzyl)Tyr-Ala (BTA). Activity is not affected by phosphoramidin, PMSF, leupeptin, iodoacetamide or pepstatin. Functionally, displays aminopeptidase activity with a broad substrate specificity. Preferentially, cleaves after Leu and Met, but also cleaves after Ala and Arg. Low activity towards Lys, Phe, Tyr, Trp, Gln, Ser and Gly and negligible activity towards Glu, Asp, Pro, Ile, Thr, Val, His and Asn. Has dipeptidase activity. Plays a role in the terminal stages of host hemoglobin digestion by cleaving the N-terminal residue of small hemoglobin-derived oligopeptides. The protein is Aminopeptidase N of Plasmodium falciparum (isolate 3D7).